Here is a 290-residue protein sequence, read N- to C-terminus: uncharacterized protein (290 aa).

Residues 7 to 21 (AVFG…MAQN) and Thr-100 each bind NAD(+). Lys-175 is an active-site residue. Position 243 (Lys-243) interacts with NAD(+).

This sequence belongs to the HIBADH-related family.

This is an uncharacterized protein from Synechocystis sp. (strain ATCC 27184 / PCC 6803 / Kazusa).